A 390-amino-acid chain; its full sequence is S-adenosylmethionine synthase 2 (390 aa).

Glutamate 9 contacts Mg(2+). Histidine 15 serves as a coordination point for ATP. Glutamate 43 contacts K(+). L-methionine is bound by residues glutamate 56 and glutamine 99. Residues 167–169, 235–238, aspartate 246, 252–253, alanine 269, lysine 273, and lysine 277 each bind ATP; these read DGK, SGRF, and RK. An L-methionine-binding site is contributed by aspartate 246. Lysine 277 serves as a coordination point for L-methionine.

Belongs to the AdoMet synthase family. Homotetramer. Requires Mn(2+) as cofactor. It depends on Mg(2+) as a cofactor. The cofactor is Co(2+). K(+) serves as cofactor.

It localises to the cytoplasm. The catalysed reaction is L-methionine + ATP + H2O = S-adenosyl-L-methionine + phosphate + diphosphate. The protein operates within amino-acid biosynthesis; S-adenosyl-L-methionine biosynthesis; S-adenosyl-L-methionine from L-methionine: step 1/1. Its function is as follows. Catalyzes the formation of S-adenosylmethionine from methionine and ATP. The reaction comprises two steps that are both catalyzed by the same enzyme: formation of S-adenosylmethionine (AdoMet) and triphosphate, and subsequent hydrolysis of the triphosphate. The protein is S-adenosylmethionine synthase 2 (METK2) of Solanum tuberosum (Potato).